Here is a 489-residue protein sequence, read N- to C-terminus: MPLASLSLDPAPFPLIRPAAGWSGRVLPVPGPAPRLCRPLRAAPVAPATTDEPSAAARGRLESLSQVAGVLGTQWGDEGKGKLVDILAQRFDVVARCQGGANAGHTIYNSEGKKFALHLVPSGILNENTQCVIGNGVVVHLPGFFKEIDGLESNGISCKGRLLVSDRAHLLFDLHQVVDGLREVELGNSLIGTTKRGIGPCYSNKVTRNGLRISDLRHMDTFGAKLNNLLRDAALRFKDFEYNSKILKEEVEKYKRFAERLEPFITDTVHFMNQSILQKKKILVEGGQATMLDIDFGTYPFVTSSSPSAGGICTGLGIAPRSLGDIIGVVKAYTTRVGSGPFPTELLGKTGDLLRASGMEFGTTTGRPRRCGWLDIVALKYCCQINGFSSLNLTKLDVLTGLKEIKLGTSYYTDDGNTVQSFPADLDLLEQIKVKYEALPGWEEDISSIRDYSDLPETARRYVERIEELVGIPVHYIGVGPGRDALIYK.

Residues 1–54 (MPLASLSLDPAPFPLIRPAAGWSGRVLPVPGPAPRLCRPLRAAPVAPATTDEPS) constitute a chloroplast transit peptide. Residues 76–82 (GDEGKGK) and 104–106 (GHT) contribute to the GTP site. Catalysis depends on aspartate 77, which acts as the Proton acceptor. Aspartate 77 and glycine 104 together coordinate Mg(2+). IMP contacts are provided by residues 77 to 80 (DEGK), 102 to 105 (NAGH), threonine 194, arginine 208, glutamine 288, threonine 303, and arginine 367. Histidine 105 (proton donor) is an active-site residue. Position 363–369 (363–369 (TTTGRPR)) interacts with substrate. GTP is bound by residues arginine 369, 395–397 (KLD), and 478–480 (GVG).

It belongs to the adenylosuccinate synthetase family. In terms of assembly, homodimer. The cofactor is Mg(2+).

Its subcellular location is the plastid. It is found in the chloroplast. The catalysed reaction is IMP + L-aspartate + GTP = N(6)-(1,2-dicarboxyethyl)-AMP + GDP + phosphate + 2 H(+). Its pathway is purine metabolism; AMP biosynthesis via de novo pathway; AMP from IMP: step 1/2. Its function is as follows. Plays an important role in the de novo pathway and in the salvage pathway of purine nucleotide biosynthesis. Catalyzes the first committed step in the biosynthesis of AMP from IMP. The protein is Adenylosuccinate synthetase 2, chloroplastic of Sorghum bicolor (Sorghum).